We begin with the raw amino-acid sequence, 121 residues long: Ribonuclease P protein component (121 aa).

The protein belongs to the RnpA family. Consists of a catalytic RNA component (M1 or rnpB) and a protein subunit.

The enzyme catalyses Endonucleolytic cleavage of RNA, removing 5'-extranucleotides from tRNA precursor.. Functionally, RNaseP catalyzes the removal of the 5'-leader sequence from pre-tRNA to produce the mature 5'-terminus. It can also cleave other RNA substrates such as 4.5S RNA. The protein component plays an auxiliary but essential role in vivo by binding to the 5'-leader sequence and broadening the substrate specificity of the ribozyme. The polypeptide is Ribonuclease P protein component (Lactobacillus delbrueckii subsp. bulgaricus (strain ATCC 11842 / DSM 20081 / BCRC 10696 / JCM 1002 / NBRC 13953 / NCIMB 11778 / NCTC 12712 / WDCM 00102 / Lb 14)).